A 185-amino-acid chain; its full sequence is MKMIVGLGNIGPQYDNTRHNTGFMVVDAFAQQHGIALTTRKMDARFGSGLVNGEKVLVVKPTTFMNESGRAVHPIMDYFKIDVADVMVVQDDMDLPLGRIRLRDHGSAGGHNGIKSIIAHVGTQNFGRLKVGIAHPQQHTVVDYVLGKFTTDQRPVFNQAADRAVAALDDWVAGSDFMQLMNQYN.

Residue Tyr14 participates in tRNA binding. The Proton acceptor role is filled by His19. 3 residues coordinate tRNA: Phe64, Asn66, and Asn112.

The protein belongs to the PTH family. In terms of assembly, monomer.

The protein resides in the cytoplasm. The enzyme catalyses an N-acyl-L-alpha-aminoacyl-tRNA + H2O = an N-acyl-L-amino acid + a tRNA + H(+). Its function is as follows. Hydrolyzes ribosome-free peptidyl-tRNAs (with 1 or more amino acids incorporated), which drop off the ribosome during protein synthesis, or as a result of ribosome stalling. Functionally, catalyzes the release of premature peptidyl moieties from peptidyl-tRNA molecules trapped in stalled 50S ribosomal subunits, and thus maintains levels of free tRNAs and 50S ribosomes. This is Peptidyl-tRNA hydrolase from Levilactobacillus brevis (strain ATCC 367 / BCRC 12310 / CIP 105137 / JCM 1170 / LMG 11437 / NCIMB 947 / NCTC 947) (Lactobacillus brevis).